Reading from the N-terminus, the 262-residue chain is tRNA pseudouridine synthase A (262 aa).

Asp-51 (nucleophile) is an active-site residue. Residue Tyr-109 participates in substrate binding.

The protein belongs to the tRNA pseudouridine synthase TruA family. In terms of assembly, homodimer.

The enzyme catalyses uridine(38/39/40) in tRNA = pseudouridine(38/39/40) in tRNA. In terms of biological role, formation of pseudouridine at positions 38, 39 and 40 in the anticodon stem and loop of transfer RNAs. The chain is tRNA pseudouridine synthase A from Actinobacillus pleuropneumoniae serotype 7 (strain AP76).